Here is a 122-residue protein sequence, read N- to C-terminus: Large ribosomal subunit protein uL14 (122 aa).

The protein belongs to the universal ribosomal protein uL14 family. Part of the 50S ribosomal subunit. Forms a cluster with proteins L3 and L19. In the 70S ribosome, L14 and L19 interact and together make contacts with the 16S rRNA in bridges B5 and B8.

Binds to 23S rRNA. Forms part of two intersubunit bridges in the 70S ribosome. The polypeptide is Large ribosomal subunit protein uL14 (Fusobacterium nucleatum subsp. nucleatum (strain ATCC 25586 / DSM 15643 / BCRC 10681 / CIP 101130 / JCM 8532 / KCTC 2640 / LMG 13131 / VPI 4355)).